Reading from the N-terminus, the 421-residue chain is Ribulose bisphosphate carboxylase large chain (421 aa).

Positions 68 and 118 each coordinate substrate. The active-site Proton acceptor is the Lys-120. Lys-122 is a binding site for substrate. Residues Lys-146, Asp-148, and Glu-149 each coordinate Mg(2+). At Lys-146 the chain carries N6-carboxylysine. Residue His-239 is the Proton acceptor of the active site. Substrate-binding residues include Arg-240, His-272, and Ser-324.

Belongs to the RuBisCO large chain family. Type I subfamily. In terms of assembly, heterohexadecamer of 8 large chains and 8 small chains; disulfide-linked. The disulfide link is formed within the large subunit homodimers. Requires Mg(2+) as cofactor. Post-translationally, the disulfide bond which can form in the large chain dimeric partners within the hexadecamer appears to be associated with oxidative stress and protein turnover.

Its subcellular location is the plastid. The protein resides in the chloroplast. The catalysed reaction is 2 (2R)-3-phosphoglycerate + 2 H(+) = D-ribulose 1,5-bisphosphate + CO2 + H2O. It carries out the reaction D-ribulose 1,5-bisphosphate + O2 = 2-phosphoglycolate + (2R)-3-phosphoglycerate + 2 H(+). Functionally, ruBisCO catalyzes two reactions: the carboxylation of D-ribulose 1,5-bisphosphate, the primary event in carbon dioxide fixation, as well as the oxidative fragmentation of the pentose substrate in the photorespiration process. Both reactions occur simultaneously and in competition at the same active site. This chain is Ribulose bisphosphate carboxylase large chain (rbcL), found in Aegilops tauschii (Tausch's goatgrass).